Consider the following 402-residue polypeptide: Multidrug resistance protein MdtH (402 aa).

At Met-1 to Lys-12 the chain is on the cytoplasmic side. A helical transmembrane segment spans residues Tyr-13–Ile-33. At Ser-34–Glu-98 the chain is on the periplasmic side. A helical transmembrane segment spans residues Pro-99–Phe-116. Over Asp-117–Ser-138 the chain is Cytoplasmic. Residues Leu-139–Leu-159 form a helical membrane-spanning segment. The Periplasmic segment spans residues Gln-160–Arg-164. The chain crosses the membrane as a helical span at residues Leu-165 to Leu-185. Residues Pro-186–Tyr-213 are Cytoplasmic-facing. The helical transmembrane segment at Val-214–Met-234 threads the bilayer. Residues Val-235–Ser-243 lie on the Periplasmic side of the membrane. Residues Ala-244 to Ala-264 traverse the membrane as a helical segment. Residues Arg-265 to Arg-276 lie on the Cytoplasmic side of the membrane. Residues Leu-277–Leu-297 form a helical membrane-spanning segment. The Periplasmic segment spans residues Gln-298–Gln-299. Residues Leu-300–Thr-320 form a helical membrane-spanning segment. The Cytoplasmic portion of the chain corresponds to Leu-321–Arg-339. Residues Leu-340 to Gly-360 traverse the membrane as a helical segment. Over Lys-361 to Glu-367 the chain is Periplasmic. The helical transmembrane segment at Leu-368–Phe-388 threads the bilayer. The Cytoplasmic segment spans residues Ser-389–Ala-402.

The protein belongs to the major facilitator superfamily. DHA1 family. MdtH (TC 2.A.1.2.21) subfamily.

The protein localises to the cell inner membrane. In Shigella flexneri serotype 5b (strain 8401), this protein is Multidrug resistance protein MdtH.